The sequence spans 159 residues: Phosphopantetheine adenylyltransferase (159 aa).

Ser-8 contacts substrate. Residues 8–9 and His-16 each bind ATP; that span reads SF. Residues Lys-40, Leu-72, and Arg-86 each contribute to the substrate site. Residues 87–89, Glu-97, and 122–128 contribute to the ATP site; these read GLR and YSFISSS.

This sequence belongs to the bacterial CoaD family. In terms of assembly, homohexamer. The cofactor is Mg(2+).

The protein resides in the cytoplasm. The catalysed reaction is (R)-4'-phosphopantetheine + ATP + H(+) = 3'-dephospho-CoA + diphosphate. The protein operates within cofactor biosynthesis; coenzyme A biosynthesis; CoA from (R)-pantothenate: step 4/5. In terms of biological role, reversibly transfers an adenylyl group from ATP to 4'-phosphopantetheine, yielding dephospho-CoA (dPCoA) and pyrophosphate. This is Phosphopantetheine adenylyltransferase from Thermosipho melanesiensis (strain DSM 12029 / CIP 104789 / BI429).